We begin with the raw amino-acid sequence, 138 residues long: uncharacterized protein (138 aa).

It is found in the plastid. Its subcellular location is the chloroplast. This is an uncharacterized protein from Chlorella vulgaris (Green alga).